The chain runs to 202 residues: Ig delta chain C region (202 aa).

The disordered stretch occupies residues lysine 32–asparagine 58. Over residues threonine 41–alanine 56 the composition is skewed to polar residues. The Ig-like domain occupies proline 66–glutamate 178.

The sequence is that of Ig delta chain C region from Rattus norvegicus (Rat).